We begin with the raw amino-acid sequence, 118 residues long: Ribonuclease P protein component (118 aa).

The protein belongs to the RnpA family. As to quaternary structure, consists of a catalytic RNA component (M1 or rnpB) and a protein subunit.

It catalyses the reaction Endonucleolytic cleavage of RNA, removing 5'-extranucleotides from tRNA precursor.. Its function is as follows. RNaseP catalyzes the removal of the 5'-leader sequence from pre-tRNA to produce the mature 5'-terminus. It can also cleave other RNA substrates such as 4.5S RNA. The protein component plays an auxiliary but essential role in vivo by binding to the 5'-leader sequence and broadening the substrate specificity of the ribozyme. In Vibrio campbellii (strain ATCC BAA-1116), this protein is Ribonuclease P protein component.